Here is a 345-residue protein sequence, read N- to C-terminus: Transmembrane protein 144 homolog (345 aa).

10 consecutive transmembrane segments (helical) span residues 3 to 23 (IAVG…MFVP), 32 to 52 (GIFV…VVYS), 61 to 81 (PLAM…VPIM), 84 to 104 (IGIG…GWAA), 120 to 140 (PFLN…FSQI), 193 to 213 (LAII…VPVI), 233 to 253 (VFSH…GYVI), 265 to 285 (LVGP…SWFV), 293 to 313 (AVSF…WSVF), and 324 to 344 (LRLL…VGVS).

The protein belongs to the TMEM144 family.

It is found in the membrane. This Caenorhabditis elegans protein is Transmembrane protein 144 homolog.